Here is a 210-residue protein sequence, read N- to C-terminus: Cdc42 effector protein 2 (210 aa).

S2 is subject to N-acetylserine. Residues 30-44 (ISPPLGDFRHTIHIG) form the CRIB domain. S31, S101, and S141 each carry phosphoserine. A disordered region spans residues 122–171 (PTAQAPPKPPRLHLETPQPSPQEGGSVDIWRIPETGSPNSGLTPESGAEE).

It belongs to the BORG/CEP family. As to quaternary structure, interacts with RHOQ and CDC42 in a GTP-dependent manner, and with SEPT7. Highly expressed in the heart. Weakly expressed in the pancreas and liver.

Its subcellular location is the endomembrane system. It is found in the cytoplasm. The protein resides in the cytoskeleton. Probably involved in the organization of the actin cytoskeleton. May act downstream of CDC42 to induce actin filament assembly leading to cell shape changes. Induces pseudopodia formation in fibroblasts in a CDC42-dependent manner. The protein is Cdc42 effector protein 2 (CDC42EP2) of Homo sapiens (Human).